A 388-amino-acid polypeptide reads, in one-letter code: 1-deoxy-D-xylulose 5-phosphate reductoisomerase (388 aa).

Residues Thr15, Gly16, Ser17, Ile18, and Asn127 each contribute to the NADPH site. Lys128 contributes to the 1-deoxy-D-xylulose 5-phosphate binding site. Glu129 lines the NADPH pocket. Asp153 contacts Mn(2+). 1-deoxy-D-xylulose 5-phosphate contacts are provided by Ser154, Glu155, Ser179, and His202. Mn(2+) is bound at residue Glu155. Gly208 is an NADPH binding site. 4 residues coordinate 1-deoxy-D-xylulose 5-phosphate: Ser215, Asn220, Lys221, and Glu224. Glu224 lines the Mn(2+) pocket.

It belongs to the DXR family. It depends on Mg(2+) as a cofactor. The cofactor is Mn(2+).

The enzyme catalyses 2-C-methyl-D-erythritol 4-phosphate + NADP(+) = 1-deoxy-D-xylulose 5-phosphate + NADPH + H(+). It functions in the pathway isoprenoid biosynthesis; isopentenyl diphosphate biosynthesis via DXP pathway; isopentenyl diphosphate from 1-deoxy-D-xylulose 5-phosphate: step 1/6. Functionally, catalyzes the NADPH-dependent rearrangement and reduction of 1-deoxy-D-xylulose-5-phosphate (DXP) to 2-C-methyl-D-erythritol 4-phosphate (MEP). The sequence is that of 1-deoxy-D-xylulose 5-phosphate reductoisomerase from Bacteroides fragilis (strain ATCC 25285 / DSM 2151 / CCUG 4856 / JCM 11019 / LMG 10263 / NCTC 9343 / Onslow / VPI 2553 / EN-2).